A 365-amino-acid chain; its full sequence is Histidinol-phosphate aminotransferase 2 (365 aa).

Lysine 222 bears the N6-(pyridoxal phosphate)lysine mark.

Belongs to the class-II pyridoxal-phosphate-dependent aminotransferase family. Histidinol-phosphate aminotransferase subfamily. Homodimer. Requires pyridoxal 5'-phosphate as cofactor.

It carries out the reaction L-histidinol phosphate + 2-oxoglutarate = 3-(imidazol-4-yl)-2-oxopropyl phosphate + L-glutamate. It participates in amino-acid biosynthesis; L-histidine biosynthesis; L-histidine from 5-phospho-alpha-D-ribose 1-diphosphate: step 7/9. The chain is Histidinol-phosphate aminotransferase 2 (hisC2) from Bordetella parapertussis (strain 12822 / ATCC BAA-587 / NCTC 13253).